The chain runs to 137 residues: Small ribosomal subunit protein uS12 (137 aa).

2 disordered regions span residues 1–21 and 34–57; these read MPTINQLVRKPRKSKVEKSDS and VHTKLAAPQKRGVATRVGTMTPKK.

It belongs to the universal ribosomal protein uS12 family. As to quaternary structure, part of the 30S ribosomal subunit. Contacts proteins S8 and S17. May interact with IF1 in the 30S initiation complex.

In terms of biological role, with S4 and S5 plays an important role in translational accuracy. Interacts with and stabilizes bases of the 16S rRNA that are involved in tRNA selection in the A site and with the mRNA backbone. Located at the interface of the 30S and 50S subunits, it traverses the body of the 30S subunit contacting proteins on the other side and probably holding the rRNA structure together. The combined cluster of proteins S8, S12 and S17 appears to hold together the shoulder and platform of the 30S subunit. The protein is Small ribosomal subunit protein uS12 of Streptococcus mutans serotype c (strain ATCC 700610 / UA159).